The sequence spans 51 residues: ATP synthase F(1) complex subunit epsilon, mitochondrial (51 aa).

N6-acetyllysine; alternate occurs at positions 21, 32, and 37. Lys-21, Lys-32, and Lys-37 each carry N6-succinyllysine; alternate. Lys-44 is modified (N6-acetyllysine).

The protein belongs to the eukaryotic ATPase epsilon family. In terms of assembly, component of the ATP synthase complex composed at least of ATP5F1A/subunit alpha, ATP5F1B/subunit beta, ATP5MC1/subunit c (homooctomer), MT-ATP6/subunit a, MT-ATP8/subunit 8, ATP5ME/subunit e, ATP5MF/subunit f, ATP5MG/subunit g, ATP5MK/subunit k, ATP5MJ/subunit j, ATP5F1C/subunit gamma, ATP5F1D/subunit delta, ATP5F1E/subunit epsilon, ATP5PF/subunit F6, ATP5PB/subunit b, ATP5PD/subunit d, ATP5PO/subunit OSCP. ATP synthase complex consists of a soluble F(1) head domain (subunits alpha(3) and beta(3)) - the catalytic core - and a membrane F(0) domain - the membrane proton channel (subunits c, a, 8, e, f, g, k and j). These two domains are linked by a central stalk (subunits gamma, delta, and epsilon) rotating inside the F1 region and a stationary peripheral stalk (subunits F6, b, d, and OSCP).

The protein resides in the mitochondrion. The protein localises to the mitochondrion inner membrane. Its function is as follows. Subunit epsilon, of the mitochondrial membrane ATP synthase complex (F(1)F(0) ATP synthase or Complex V) that produces ATP from ADP in the presence of a proton gradient across the membrane which is generated by electron transport complexes of the respiratory chain. ATP synthase complex consist of a soluble F(1) head domain - the catalytic core - and a membrane F(1) domain - the membrane proton channel. These two domains are linked by a central stalk rotating inside the F(1) region and a stationary peripheral stalk. During catalysis, ATP synthesis in the catalytic domain of F(1) is coupled via a rotary mechanism of the central stalk subunits to proton translocation. In vivo, can only synthesize ATP although its ATP hydrolase activity can be activated artificially in vitro. May be essential for the assembly of F(1) and may play an important role in the incorporation of the hydrophobic subunit c into the F(1)-c oligomer rotor of the mitochondrial ATP synthase complex. The polypeptide is ATP synthase F(1) complex subunit epsilon, mitochondrial (Bos taurus (Bovine)).